Here is a 350-residue protein sequence, read N- to C-terminus: Cyclin-O (350 aa).

Residues 1–89 are disordered; it reads MVTPCPTSPS…GSPLPGPAQP (89 aa). Residues 28 to 42 show a composition bias toward basic residues; the sequence is PVKKSRRPRLRRKQP. Ser81 bears the Phosphoserine mark.

Belongs to the cyclin family. As to expression, present in respiratory cells (at protein level).

It localises to the cytoplasm. It is found in the nucleus. Its subcellular location is the nucleolus. In terms of biological role, specifically required for generation of multiciliated cells, possibly by promoting a cell cycle state compatible with centriole amplification and maturation. Acts downstream of MCIDAS to promote mother centriole amplification and maturation in preparation for apical docking. The polypeptide is Cyclin-O (Homo sapiens (Human)).